The following is a 686-amino-acid chain: DNA topoisomerase 1 (686 aa).

In terms of domain architecture, Toprim spans 1 to 141 (MILIIAEKPN…KRMKFSALTK (141 aa)). Residues E7 and D107 each coordinate Mg(2+). One can recognise a Topo IA-type catalytic domain in the interval 156–574 (NFGMANAGIA…EAKERLTKIL (419 aa)). The tract at residues 196–201 (STGRVQ) is interaction with DNA. Catalysis depends on Y317, which acts as the O-(5'-phospho-DNA)-tyrosine intermediate. The segment at 606–634 (CPKCGGDLIVKYNKKTGKRFVGCSNWPKC) adopts a C4-type 1 zinc-finger fold. The segment at 653–678 (CCNGAPVVIIREEDGREFEICLDINC) adopts a C4-type 2; atypical zinc-finger fold.

It belongs to the type IA topoisomerase family. In terms of assembly, monomer. Requires Mg(2+) as cofactor.

It catalyses the reaction ATP-independent breakage of single-stranded DNA, followed by passage and rejoining.. Its function is as follows. Releases the supercoiling and torsional tension of DNA, which is introduced during the DNA replication and transcription, by transiently cleaving and rejoining one strand of the DNA duplex. Introduces a single-strand break via transesterification at a target site in duplex DNA. The scissile phosphodiester is attacked by the catalytic tyrosine of the enzyme, resulting in the formation of a DNA-(5'-phosphotyrosyl)-enzyme intermediate and the expulsion of a 3'-OH DNA strand. The free DNA strand then undergoes passage around the unbroken strand, thus removing DNA supercoils. Finally, in the religation step, the DNA 3'-OH attacks the covalent intermediate to expel the active-site tyrosine and restore the DNA phosphodiester backbone. This Pyrococcus horikoshii (strain ATCC 700860 / DSM 12428 / JCM 9974 / NBRC 100139 / OT-3) protein is DNA topoisomerase 1.